The sequence spans 412 residues: CCA-adding enzyme (412 aa).

2 residues coordinate ATP: Ser41 and Lys44. CTP contacts are provided by Ser41 and Lys44. Mg(2+) contacts are provided by Asp53, Asp55, and Asp106. ATP-binding residues include His129, Lys149, and Tyr158. Residues His129, Lys149, and Tyr158 each contribute to the CTP site.

This sequence belongs to the tRNA nucleotidyltransferase/poly(A) polymerase family. Archaeal CCA-adding enzyme subfamily. Homodimer. Mg(2+) is required as a cofactor.

It catalyses the reaction a tRNA precursor + 2 CTP + ATP = a tRNA with a 3' CCA end + 3 diphosphate. It carries out the reaction a tRNA with a 3' CCA end + 2 CTP + ATP = a tRNA with a 3' CCACCA end + 3 diphosphate. In terms of biological role, catalyzes the addition and repair of the essential 3'-terminal CCA sequence in tRNAs without using a nucleic acid template. Adds these three nucleotides in the order of C, C, and A to the tRNA nucleotide-73, using CTP and ATP as substrates and producing inorganic pyrophosphate. tRNA 3'-terminal CCA addition is required both for tRNA processing and repair. Also involved in tRNA surveillance by mediating tandem CCA addition to generate a CCACCA at the 3' terminus of unstable tRNAs. While stable tRNAs receive only 3'-terminal CCA, unstable tRNAs are marked with CCACCA and rapidly degraded. This is CCA-adding enzyme from Saccharolobus islandicus (strain Y.G.57.14 / Yellowstone #1) (Sulfolobus islandicus).